Consider the following 206-residue polypeptide: MKFLFDLFPVILFFAVFKWGEGNADAAQAFGQQFLSGLVSGGQVTVTQAPILLATAIAIIATILQIGYLLSRRKKVDGTLWLSLAIIVFFGGATIYFHNETFIKWKPTVLYWCFAAALLFSQIFLNKNLIRTMMEKQMSLPDGVWRRVNLSWVAFFITMGLLNLYVAFNFSTAAWVNFKLFGGMGLMFAFIIIQSLLLSKYLKEPQ.

5 consecutive transmembrane segments (helical) span residues 50–70 (PILL…GYLL), 78–98 (GTLW…IYFH), 105–125 (WKPT…QIFL), 150–170 (LSWV…AFNF), and 173–193 (AAWV…FIII).

Belongs to the YciB family.

It is found in the cell inner membrane. Functionally, plays a role in cell envelope biogenesis, maintenance of cell envelope integrity and membrane homeostasis. This chain is Inner membrane-spanning protein YciB, found in Herminiimonas arsenicoxydans.